A 327-amino-acid polypeptide reads, in one-letter code: Beta-ketoacyl-[acyl-carrier-protein] synthase III (327 aa).

Residues Cys114 and His254 contribute to the active site. Residues 255 to 259 (QANRR) are ACP-binding. Asn284 is a catalytic residue.

This sequence belongs to the thiolase-like superfamily. FabH family. In terms of assembly, homodimer.

The protein resides in the cytoplasm. The enzyme catalyses malonyl-[ACP] + acetyl-CoA + H(+) = 3-oxobutanoyl-[ACP] + CO2 + CoA. The protein operates within lipid metabolism; fatty acid biosynthesis. Functionally, catalyzes the condensation reaction of fatty acid synthesis by the addition to an acyl acceptor of two carbons from malonyl-ACP. Catalyzes the first condensation reaction which initiates fatty acid synthesis and may therefore play a role in governing the total rate of fatty acid production. Possesses both acetoacetyl-ACP synthase and acetyl transacylase activities. Its substrate specificity determines the biosynthesis of branched-chain and/or straight-chain of fatty acids. In Lactobacillus helveticus (strain DPC 4571), this protein is Beta-ketoacyl-[acyl-carrier-protein] synthase III.